A 262-amino-acid chain; its full sequence is MRSKIYFTSDAHLGSRHHADPMTVERRLAAWLERIRHEAKAIYFMGDMFDYWFEYRYVVPRGFTRFLGKVAELSDEGVEIHFFAGNHDVWLTDYLTKELGAHVHMHGITVELSGKLFRLAHGDEEYRSVKRSYDCMYRLFRNPLARLLYAAVHPRWTVGLAYGISLKSRRSGEKRKTLGNIPHAYSNDYFDIENEWLIRFAKEHSARHPEVDFYIFGHRHLLVDMALRDEKRVLILGDWIRYNSYAVWDGTTLVLESMEDME.

Mn(2+)-binding residues include D10, H12, D47, N86, H121, H218, and H220.

The protein belongs to the LpxH family. The cofactor is Mn(2+).

It is found in the cell inner membrane. The protein resides in the cytoplasm. It carries out the reaction UDP-2-N,3-O-bis[(3R)-3-hydroxytetradecanoyl]-alpha-D-glucosamine + H2O = 2-N,3-O-bis[(3R)-3-hydroxytetradecanoyl]-alpha-D-glucosaminyl 1-phosphate + UMP + 2 H(+). It participates in glycolipid biosynthesis; lipid IV(A) biosynthesis; lipid IV(A) from (3R)-3-hydroxytetradecanoyl-[acyl-carrier-protein] and UDP-N-acetyl-alpha-D-glucosamine: step 4/6. Hydrolyzes the pyrophosphate bond of UDP-2,3-diacylglucosamine to yield 2,3-diacylglucosamine 1-phosphate (lipid X) and UMP by catalyzing the attack of water at the alpha-P atom. Involved in the biosynthesis of lipid A, a phosphorylated glycolipid that anchors the lipopolysaccharide to the outer membrane of the cell. The protein is UDP-2,3-diacylglucosamine hydrolase of Porphyromonas gingivalis (strain ATCC BAA-308 / W83).